We begin with the raw amino-acid sequence, 184 residues long: ATP synthase subunit b, chloroplastic (184 aa).

Residues 27-49 (LATNPINLSVVLGVLIFFGKGVL) form a helical membrane-spanning segment.

It belongs to the ATPase B chain family. As to quaternary structure, F-type ATPases have 2 components, F(1) - the catalytic core - and F(0) - the membrane proton channel. F(1) has five subunits: alpha(3), beta(3), gamma(1), delta(1), epsilon(1). F(0) has four main subunits: a(1), b(1), b'(1) and c(10-14). The alpha and beta chains form an alternating ring which encloses part of the gamma chain. F(1) is attached to F(0) by a central stalk formed by the gamma and epsilon chains, while a peripheral stalk is formed by the delta, b and b' chains.

Its subcellular location is the plastid. It is found in the chloroplast thylakoid membrane. Its function is as follows. F(1)F(0) ATP synthase produces ATP from ADP in the presence of a proton or sodium gradient. F-type ATPases consist of two structural domains, F(1) containing the extramembraneous catalytic core and F(0) containing the membrane proton channel, linked together by a central stalk and a peripheral stalk. During catalysis, ATP synthesis in the catalytic domain of F(1) is coupled via a rotary mechanism of the central stalk subunits to proton translocation. Functionally, component of the F(0) channel, it forms part of the peripheral stalk, linking F(1) to F(0). This is ATP synthase subunit b, chloroplastic from Solanum bulbocastanum (Wild potato).